The sequence spans 264 residues: Apolipoprotein A-I (264 aa).

The N-terminal stretch at 1–18 (MKAVVLALAVLFLTGSQA) is a signal peptide. A run of 2 repeats spans residues 67–88 (LHLL…EQLG) and 89–110 (PVTH…QEMN). The tract at residues 67-264 (LHLLDNWDTL…DEASKKLNAQ (198 aa)) is 10 X approximate tandem repeats. Methionine sulfoxide is present on M109. The stretch at 111 to 121 (KDLEEVKVKVQ) is one 3; half-length repeat. Tandem repeats lie at residues 122-143 (PYLD…EKVG), 144-165 (PLGA…EKLT), 166-187 (PLGE…TQLA), 188-207 (PYSD…IRDS), and 208-229 (PSLA…EKAK). A 9; half-length repeat occupies 230–240 (PALEDLRQGLM). The stretch at 241–264 (PVLENLKTTVLAAIDEASKKLNAQ) is repeat 10.

The protein belongs to the apolipoprotein A1/A4/E family. In terms of assembly, homodimer. Interacts with APOA1BP and CLU. Component of a sperm activating protein complex (SPAP), consisting of APOA1, an immunoglobulin heavy chain, an immunoglobulin light chain and albumin. Interacts with NDRG1. Interacts with SCGB3A2. Interacts with NAXE and YJEFN3. Glycosylated. In terms of processing, palmitoylated. Post-translationally, phosphorylation sites are present in the extracellular medium.

It is found in the secreted. Functionally, participates in the reverse transport of cholesterol from tissues to the liver for excretion by promoting cholesterol efflux from tissues and by acting as a cofactor for the lecithin cholesterol acyltransferase (LCAT). As part of the SPAP complex, activates spermatozoa motility. In Jaculus jaculus (Lesser Egyptian jerboa), this protein is Apolipoprotein A-I (APOA1).